Consider the following 125-residue polypeptide: Large ribosomal subunit protein bL17 (125 aa).

It belongs to the bacterial ribosomal protein bL17 family. As to quaternary structure, part of the 50S ribosomal subunit. Contacts protein L32.

In Acinetobacter baumannii (strain AB0057), this protein is Large ribosomal subunit protein bL17.